The sequence spans 200 residues: Holliday junction branch migration complex subunit RuvA (200 aa).

A domain I region spans residues 1-63; sequence MIASVRGVVT…EDSLTLYGFA (63 aa). A domain II region spans residues 64–142; it reads DDDAKALFEL…PVPVGADSAA (79 aa). Positions 143 to 151 are flexible linker; the sequence is GVTTGAWPE. Positions 151 to 200 are domain III; sequence EQVRQALVGLGWTAAQADQAVTAVAETVDGAVPPVPVLLRQAIRLLGRTR.

It belongs to the RuvA family. As to quaternary structure, homotetramer. Forms an RuvA(8)-RuvB(12)-Holliday junction (HJ) complex. HJ DNA is sandwiched between 2 RuvA tetramers; dsDNA enters through RuvA and exits via RuvB. An RuvB hexamer assembles on each DNA strand where it exits the tetramer. Each RuvB hexamer is contacted by two RuvA subunits (via domain III) on 2 adjacent RuvB subunits; this complex drives branch migration. In the full resolvosome a probable DNA-RuvA(4)-RuvB(12)-RuvC(2) complex forms which resolves the HJ.

The protein localises to the cytoplasm. Functionally, the RuvA-RuvB-RuvC complex processes Holliday junction (HJ) DNA during genetic recombination and DNA repair, while the RuvA-RuvB complex plays an important role in the rescue of blocked DNA replication forks via replication fork reversal (RFR). RuvA specifically binds to HJ cruciform DNA, conferring on it an open structure. The RuvB hexamer acts as an ATP-dependent pump, pulling dsDNA into and through the RuvAB complex. HJ branch migration allows RuvC to scan DNA until it finds its consensus sequence, where it cleaves and resolves the cruciform DNA. The chain is Holliday junction branch migration complex subunit RuvA from Salinispora tropica (strain ATCC BAA-916 / DSM 44818 / JCM 13857 / NBRC 105044 / CNB-440).